Here is a 143-residue protein sequence, read N- to C-terminus: Peptide methionine sulfoxide reductase MsrB (143 aa).

The MsrB domain maps to 16 to 139; the sequence is DAELRRRLTP…NSAALNFEAK (124 aa). Residues Cys-55, Cys-58, Cys-104, and Cys-107 each coordinate Zn(2+). Cys-128 (nucleophile) is an active-site residue.

It belongs to the MsrB Met sulfoxide reductase family. Zn(2+) is required as a cofactor.

It catalyses the reaction L-methionyl-[protein] + [thioredoxin]-disulfide + H2O = L-methionyl-(R)-S-oxide-[protein] + [thioredoxin]-dithiol. This Burkholderia pseudomallei (strain 1710b) protein is Peptide methionine sulfoxide reductase MsrB.